The chain runs to 430 residues: UDP-N-acetylglucosamine 1-carboxyvinyltransferase 1 (430 aa).

Phosphoenolpyruvate is bound at residue 22 to 23; the sequence is KN. Arginine 93 contributes to the UDP-N-acetyl-alpha-D-glucosamine binding site. Cysteine 117 acts as the Proton donor in catalysis. Residue cysteine 117 is modified to 2-(S-cysteinyl)pyruvic acid O-phosphothioketal. UDP-N-acetyl-alpha-D-glucosamine is bound by residues 122 to 126, aspartate 305, and valine 327; that span reads RPVDL.

This sequence belongs to the EPSP synthase family. MurA subfamily.

It is found in the cytoplasm. It catalyses the reaction phosphoenolpyruvate + UDP-N-acetyl-alpha-D-glucosamine = UDP-N-acetyl-3-O-(1-carboxyvinyl)-alpha-D-glucosamine + phosphate. It participates in cell wall biogenesis; peptidoglycan biosynthesis. Cell wall formation. Adds enolpyruvyl to UDP-N-acetylglucosamine. The polypeptide is UDP-N-acetylglucosamine 1-carboxyvinyltransferase 1 (Listeria monocytogenes serotype 4b (strain F2365)).